We begin with the raw amino-acid sequence, 264 residues long: Glutamate racemase (264 aa).

Residues 10–11 (DS) and 42–43 (YG) contribute to the substrate site. C73 acts as the Proton donor/acceptor in catalysis. 74–75 (NT) contributes to the substrate binding site. The active-site Proton donor/acceptor is the C183. 184–185 (TH) is a binding site for substrate.

It belongs to the aspartate/glutamate racemases family.

It carries out the reaction L-glutamate = D-glutamate. The protein operates within cell wall biogenesis; peptidoglycan biosynthesis. Functionally, provides the (R)-glutamate required for cell wall biosynthesis. The sequence is that of Glutamate racemase from Streptococcus equi subsp. zooepidemicus (strain H70).